We begin with the raw amino-acid sequence, 292 residues long: Elongation factor Ts (292 aa).

The interval 79–82 is involved in Mg(2+) ion dislocation from EF-Tu; sequence TDFV.

This sequence belongs to the EF-Ts family.

It localises to the cytoplasm. In terms of biological role, associates with the EF-Tu.GDP complex and induces the exchange of GDP to GTP. It remains bound to the aminoacyl-tRNA.EF-Tu.GTP complex up to the GTP hydrolysis stage on the ribosome. This chain is Elongation factor Ts, found in Xylella fastidiosa (strain 9a5c).